The following is a 418-amino-acid chain: Trans-acting enoyl reductase (418 aa).

Belongs to the saccharopine dehydrogenase family. Enoyl reductase subfamily.

Involved in the reduction of the double bond between C-4 and C-5 during phthiocerol dimycocerosates (DIM A) and glycosylated phenolphthiocerol dimycocerosates (PGL) biosynthesis. The chain is Trans-acting enoyl reductase from Mycobacterium tuberculosis (strain ATCC 25177 / H37Ra).